Reading from the N-terminus, the 116-residue chain is Large ribosomal subunit protein uL24 (116 aa).

Residues 1–27 are disordered; it reads MAGRKSSTPTRHKMHVKTGDTVQVISG.

This sequence belongs to the universal ribosomal protein uL24 family. Part of the 50S ribosomal subunit.

Functionally, one of two assembly initiator proteins, it binds directly to the 5'-end of the 23S rRNA, where it nucleates assembly of the 50S subunit. One of the proteins that surrounds the polypeptide exit tunnel on the outside of the subunit. The polypeptide is Large ribosomal subunit protein uL24 (Picosynechococcus sp. (strain ATCC 27264 / PCC 7002 / PR-6) (Agmenellum quadruplicatum)).